Consider the following 382-residue polypeptide: tRNA(Ile)-lysidine synthase (382 aa).

50–55 (SGGRDS) is a binding site for ATP.

The protein belongs to the tRNA(Ile)-lysidine synthase family.

The protein resides in the cytoplasm. The enzyme catalyses cytidine(34) in tRNA(Ile2) + L-lysine + ATP = lysidine(34) in tRNA(Ile2) + AMP + diphosphate + H(+). Functionally, ligates lysine onto the cytidine present at position 34 of the AUA codon-specific tRNA(Ile) that contains the anticodon CAU, in an ATP-dependent manner. Cytidine is converted to lysidine, thus changing the amino acid specificity of the tRNA from methionine to isoleucine. The polypeptide is tRNA(Ile)-lysidine synthase (Bifidobacterium animalis subsp. lactis (strain AD011)).